The following is a 288-amino-acid chain: MAEKRHTRDSEAQRLPDSFKDSPSKGLGPCGWILVAFSFLFTVITFPISIWMCIKIIKEYERAIIFRLGRILQGGAKGPGLFFILPCTDSFIKVDMRTISFDIPPQEILTKDSVTISVDGVVYYRVQNATLAVANITNADSATRLLAQTTLRNVLGTKNLSQILSDREEIAHNMQSTLDDATDAWGIKVERVEIKDVKLPVQLQRAMAAEAEASREARAKVIAAEGEMNASRALKEASMVITESPAALQLRYLQTLTTIAAEKNSTIVFPLPIDMLQGIIGAKHSHLG.

The tract at residues 1 to 22 (MAEKRHTRDSEAQRLPDSFKDS) is disordered. Residues 1–25 (MAEKRHTRDSEAQRLPDSFKDSPSK) are Cytoplasmic-facing. Ser10 is subject to Phosphoserine; by PKA. Phosphoserine is present on Ser18. Residues 26-54 (GLGPCGWILVAFSFLFTVITFPISIWMCI) lie within the membrane without spanning it. A lipid anchor (S-palmitoyl cysteine) is attached at Cys30. Over 55 to 288 (KIIKEYERAI…IIGAKHSHLG (234 aa)) the chain is Cytoplasmic. A lipid anchor (S-palmitoyl cysteine; partial) is attached at Cys87. Phosphoserine occurs at positions 161 and 244. The interval 265-273 (STIVFPLPI) is required for homooligomerization. The required for lipid raft association stretch occupies residues 267 to 269 (IVF). An interaction with LANCL1 region spans residues 273-287 (IDMLQGIIGAKHSHL).

This sequence belongs to the band 7/mec-2 family. In terms of assembly, homodimer and higher order homooligomer. The homodimer is banana-shaped. Interacts with ASIC1, ASIC2 and ASIC3. Interacts with LANCL1. Interacts with SLC2A1. Interacts with SLC4A1; this interaction positively regulates SLC4A1 activity. Identified in large complexes with SLC40A1, SLC14A1, SLC29A1 and AQP1. Interacts with STOML1; may redistribute STOM from the plasma membrane to late endosomes. Detected in erythrocytes (at protein level). Widely expressed.

It is found in the cell membrane. The protein resides in the cytoplasm. It localises to the cytoskeleton. Its subcellular location is the membrane raft. The protein localises to the melanosome. It is found in the cytoplasmic vesicle. Its function is as follows. Regulates ion channel activity and transmembrane ion transport. Regulates ASIC2 and ASIC3 channel activity. The sequence is that of Stomatin from Homo sapiens (Human).